We begin with the raw amino-acid sequence, 572 residues long: Urease subunit alpha (572 aa).

A Urease domain is found at Gly136 to Phe572. Ni(2+)-binding residues include His141, His143, and Lys224. Lys224 is subject to N6-carboxylysine. Residue His226 participates in substrate binding. 2 residues coordinate Ni(2+): His253 and His279. His327 acts as the Proton donor in catalysis. Asp367 contributes to the Ni(2+) binding site.

It belongs to the metallo-dependent hydrolases superfamily. Urease alpha subunit family. Heterotrimer of UreA (gamma), UreB (beta) and UreC (alpha) subunits. Three heterotrimers associate to form the active enzyme. Requires Ni cation as cofactor. In terms of processing, carboxylation allows a single lysine to coordinate two nickel ions.

It localises to the cytoplasm. The enzyme catalyses urea + 2 H2O + H(+) = hydrogencarbonate + 2 NH4(+). The protein operates within nitrogen metabolism; urea degradation; CO(2) and NH(3) from urea (urease route): step 1/1. In Actinobacillus pleuropneumoniae serotype 5b (strain L20), this protein is Urease subunit alpha.